The chain runs to 227 residues: Cytochrome c oxidase subunit 2 (227 aa).

Residues 1 to 14 (MAYPFQLGLQDATS) are Mitochondrial intermembrane-facing. Residues 15–45 (PIMEELLHFHDHTLMIVFLISSLVLYIISLM) form a helical membrane-spanning segment. At 46-59 (LTTKLTHTSTMDAQ) the chain is on the mitochondrial matrix side. The chain crosses the membrane as a helical span at residues 60-87 (EVETVWTILPAIILILIALPSLRILYMM). The Mitochondrial intermembrane portion of the chain corresponds to 88-227 (DEINNPSLTV…YFETWSALMV (140 aa)). Residues His-161, Cys-196, Glu-198, Cys-200, His-204, and Met-207 each contribute to the Cu cation site. Mg(2+) is bound at residue Glu-198. At Tyr-218 the chain carries Phosphotyrosine.

The protein belongs to the cytochrome c oxidase subunit 2 family. As to quaternary structure, component of the cytochrome c oxidase (complex IV, CIV), a multisubunit enzyme composed of 14 subunits. The complex is composed of a catalytic core of 3 subunits MT-CO1, MT-CO2 and MT-CO3, encoded in the mitochondrial DNA, and 11 supernumerary subunits COX4I, COX5A, COX5B, COX6A, COX6B, COX6C, COX7A, COX7B, COX7C, COX8 and NDUFA4, which are encoded in the nuclear genome. The complex exists as a monomer or a dimer and forms supercomplexes (SCs) in the inner mitochondrial membrane with NADH-ubiquinone oxidoreductase (complex I, CI) and ubiquinol-cytochrome c oxidoreductase (cytochrome b-c1 complex, complex III, CIII), resulting in different assemblies (supercomplex SCI(1)III(2)IV(1) and megacomplex MCI(2)III(2)IV(2)). Found in a complex with TMEM177, COA6, COX18, COX20, SCO1 and SCO2. Interacts with TMEM177 in a COX20-dependent manner. Interacts with COX20. Interacts with COX16. Requires Cu cation as cofactor.

It localises to the mitochondrion inner membrane. The enzyme catalyses 4 Fe(II)-[cytochrome c] + O2 + 8 H(+)(in) = 4 Fe(III)-[cytochrome c] + 2 H2O + 4 H(+)(out). In terms of biological role, component of the cytochrome c oxidase, the last enzyme in the mitochondrial electron transport chain which drives oxidative phosphorylation. The respiratory chain contains 3 multisubunit complexes succinate dehydrogenase (complex II, CII), ubiquinol-cytochrome c oxidoreductase (cytochrome b-c1 complex, complex III, CIII) and cytochrome c oxidase (complex IV, CIV), that cooperate to transfer electrons derived from NADH and succinate to molecular oxygen, creating an electrochemical gradient over the inner membrane that drives transmembrane transport and the ATP synthase. Cytochrome c oxidase is the component of the respiratory chain that catalyzes the reduction of oxygen to water. Electrons originating from reduced cytochrome c in the intermembrane space (IMS) are transferred via the dinuclear copper A center (CU(A)) of subunit 2 and heme A of subunit 1 to the active site in subunit 1, a binuclear center (BNC) formed by heme A3 and copper B (CU(B)). The BNC reduces molecular oxygen to 2 water molecules using 4 electrons from cytochrome c in the IMS and 4 protons from the mitochondrial matrix. The protein is Cytochrome c oxidase subunit 2 (MT-CO2) of Canis adustus (Side-striped jackal).